Here is a 194-residue protein sequence, read N- to C-terminus: Large ribosomal subunit protein uL24c (194 aa).

Residues 1-50 (MVAMAMASLQSSMSSLSLSSNSFLGQPLSPITLSPFLQGKPTEKKCLIVM) constitute a chloroplast transit peptide.

Belongs to the universal ribosomal protein uL24 family. As to quaternary structure, part of the 50S ribosomal subunit.

The protein localises to the plastid. The protein resides in the chloroplast. Its function is as follows. One of two assembly initiator proteins, it binds directly to the 5'-end of the 23S rRNA, where it nucleates assembly of the 50S subunit. In Pisum sativum (Garden pea), this protein is Large ribosomal subunit protein uL24c (RPL24).